A 443-amino-acid chain; its full sequence is Tubulin epsilon and delta complex protein 2 (443 aa).

Positions 8–33 form a coiled coil; it reads RRLVAELRDALDSCAERQRQLEQSLR. 2 disordered regions span residues 45 to 72 and 93 to 146; these read AETP…PSPQ and GLSK…PWVP. The span at 106–124 shows a compositional bias: low complexity; the sequence is LKSGSASTATKASAPPSTS.

As to quaternary structure, interacts with TEDC1. Found in a complex with TEDC1, TEDC2, TUBE1 and TUBD1.

It localises to the cell projection. Its subcellular location is the cilium. It is found in the cytoplasm. The protein resides in the cytoskeleton. The protein localises to the microtubule organizing center. It localises to the centrosome. Its subcellular location is the centriole. Its function is as follows. Acts as a positive regulator of ciliary hedgehog signaling. Required for centriole stability. This is Tubulin epsilon and delta complex protein 2 from Bos taurus (Bovine).